Reading from the N-terminus, the 394-residue chain is Trans-enoyl reductase fumoC (394 aa).

Val-62–Lys-65 is an NADP(+) binding site. Ala-152 to Met-159 contacts substrate. NADP(+)-binding positions include Ser-224 to Ser-227, Tyr-242, and Leu-289 to Asp-290. Position 309-313 (Thr-309–Phe-313) interacts with substrate. Val-378 to Lys-379 provides a ligand contact to NADP(+).

This sequence belongs to the zinc-containing alcohol dehydrogenase family. In terms of assembly, monomer.

The protein operates within secondary metabolite biosynthesis. Trans-enoyl reductase; part of the gene cluster that mediates the biosynthesis of fumosorinone, a 2-pyridone alkaloid that acts as an inhibitor of protein tyrosine phosphatase 1B which is implicated asa negative regulator of insulin receptor signaling and a potential drug target for the treatment of type II diabetes and other associated metabolic syndromes. The polyketide-amino acid backbone of fumosorinone is first assembled by the PKS-NRPS hybrid fumoS. The PKS modules condense one acetyl-CoA starter unit with 7 malonyl-CoA units, programmed C-methylations occurring after the first 3 and the sixth extensions, and cycles of full reduction occurring after the first 2 extensions. Because fumoS lacks a designated enoyl reductase (ER) domain, the required activity is provided the enoyl reductase fumoC. Upon formation of the polyketide backbone on the thiotemplate, the polyketide is transferred to the NRPS module and linked to tyrosine to produce the acyltetramic acid intermediate called prefumosorinone A. The cytochrome P450 monooxygenase fumoA then probably catalyzes an unprecedented oxidative ring expansion of prefumosorinone A to form prefumosorinone B which contains the 2-pyridone core of fumosorinone. The cytochrome P450 monooxygenase fumoB might hydroxylate the nitrogen of prefumosorinone B, but not the acyltetramic acid prefumosorinone A, to form fumosorinone. This Cordyceps fumosorosea (strain ARSEF 2679) (Isaria fumosorosea) protein is Trans-enoyl reductase fumoC.